The following is a 257-amino-acid chain: ATP synthase subunit a (257 aa).

The propeptide at 1–4 (MFIT) is removed in mature form. 8 consecutive transmembrane segments (helical) span residues 27 to 47 (FSNFGFYLGLSALIAISLAII), 58 to 78 (IVPQKFGIAMEAIYFTMLNLV), 93 to 113 (YFPFIWSLFVLILFSNLLRLI), 122 to 142 (QLIFTLGLSISILIGATILGL), 149 to 169 (VFGLFLPSGTPTPLIPLLVLI), 189 to 209 (IIAGHLTMSILGGLIFTFMGL), 214 to 234 (FIIGFLPITVLVAISLLEFGI), and 236 to 256 (FIQAYVFAILTCGFINDSLNL).

It belongs to the ATPase A chain family. In terms of assembly, F-type ATPases have 2 components, CF(1) - the catalytic core - and CF(0) - the membrane proton channel. CF(1) has five subunits: alpha(3), beta(3), gamma(1), delta(1), epsilon(1). CF(0) has three main subunits: a, b and c.

It localises to the mitochondrion inner membrane. Its function is as follows. Mitochondrial membrane ATP synthase (F(1)F(0) ATP synthase or Complex V) produces ATP from ADP in the presence of a proton gradient across the membrane which is generated by electron transport complexes of the respiratory chain. F-type ATPases consist of two structural domains, F(1) - containing the extramembraneous catalytic core and F(0) - containing the membrane proton channel, linked together by a central stalk and a peripheral stalk. During catalysis, ATP synthesis in the catalytic domain of F(1) is coupled via a rotary mechanism of the central stalk subunits to proton translocation. Key component of the proton channel; it may play a direct role in the translocation of protons across the membrane. This chain is ATP synthase subunit a (atp6), found in Schizosaccharomyces pombe (strain 972 / ATCC 24843) (Fission yeast).